Consider the following 7260-residue polypeptide: Nonribosomal peptide synthetase ecdA (7260 aa).

One can recognise a Carrier 1 domain in the interval 4–80 (TNEMERKRVF…ELFETIQYLQ (77 aa)). Serine 41 bears the O-(pantetheine 4'-phosphoryl)serine mark. The tract at residues 134–549 (EDVYPSTPLQ…SINEILTLPA (416 aa)) is condensation 1. The tract at residues 575-965 (QDQVRSQPAA…DGSLLYVGRC (391 aa)) is adenylation 1. The Carrier 2 domain maps to 1090-1166 (APSTAIEHKL…DLARELEGRN (77 aa)). Serine 1127 is modified (O-(pantetheine 4'-phosphoryl)serine). The tract at residues 1208–1628 (EDIIPCTAMQ…LGDLSLLSAD (421 aa)) is condensation 2. Residues 1653-2054 (EEQITARPDS…GRRDTQIKIR (402 aa)) are adenylation 2. The 77-residue stretch at 2188 to 2264 (TPSTPTESQL…DLANLLSSRF (77 aa)) folds into the Carrier 3 domain. At serine 2225 the chain carries O-(pantetheine 4'-phosphoryl)serine. Residues 2314–2719 (QDVYPCTPLQ…THVVQQLCDP (406 aa)) form a condensation 3 region. The segment at 2763 to 3156 (KQALAQPNAP…GRRDTQVKIR (394 aa)) is adenylation 3. The Carrier 4 domain occupies 3287 to 3365 (QPATEMEKML…ELAQVLEERV (79 aa)). At serine 3324 the chain carries O-(pantetheine 4'-phosphoryl)serine. The condensation 4 stretch occupies residues 3417-3831 (VQDVYPCTPL…LLSPNDQQQI (415 aa)). The interval 3851–4248 (EEQAMAHPTK…SFVYVARRNT (398 aa)) is adenylation 4. The region spanning 4394-4471 (APATAMERTL…DLANLLADGA (78 aa)) is the Carrier 5 domain. An O-(pantetheine 4'-phosphoryl)serine modification is found at serine 4431. Residues 4510-4910 (EDIYPATPLQ…HFVHVAEQLF (401 aa)) are condensation 5. The interval 4955–5357 (ERAALQPNAP…GRRDLQVKIR (403 aa)) is adenylation 5. One can recognise a Carrier 6 domain in the interval 5496 to 5573 (APRTVMEQQV…DLALVLSERG (78 aa)). Serine 5533 carries the O-(pantetheine 4'-phosphoryl)serine modification. The interval 5622–6043 (EDVYPCTPLQ…AVSEKDERQI (422 aa)) is condensation 6. The adenylation 6 stretch occupies residues 6063–6460 (QEQVARTPGE…GRHDSQVKIR (398 aa)). The 77-residue stretch at 6592–6668 (APSTAMERQL…EVAQVVEDRV (77 aa)) folds into the Carrier 7 domain. O-(pantetheine 4'-phosphoryl)serine is present on serine 6629. The segment at 6718 to 7133 (LPTTDFQALT…ILDSPGLLVS (416 aa)) is condensation 7. Residues 7241–7260 (CEEAEKSASVTSSERRLATI) form a disordered region.

The protein belongs to the NRP synthetase family.

It functions in the pathway antifungal biosynthesis. In terms of biological role, nonribosomal peptide synthetase; part of the gene cluster that mediates the biosynthesis of echinocandin B, a fungal lipidated cyclic hexapeptide that acts as an antifungal agent. Linoleoyl-AMP, produced by the fatty-acyl-AMP ligase ecdI, is transferred to the initiation carrier domain (T0) of ecdA. The linoleoyl-S-phosphopantetheinyl-T0 is sequentially extended with L-ornithine, L-threonine, L-proline, L-homotyrosine, L-threonine, and 4R-methyl-L-proline to form the linear hexapeptide. Thereafter, the terminal condensation (C7) performs macrocyclization of the NRPS product and the cyclic scaffold is released from ecdA. All six of the amino acid residues are hydroxylated, including 4R,5R-dihydroxy-L-ornithine, 4R-hydroxyl-L-proline, 3S,4S-dihydroxy-L-homotyrosine, and 3S-hydroxyl-4S-methyl-L-prolin. In the pathway, all the hydroxylation reactions are proposed to occur following completion of the cyclic peptide, so the unhydroxylated precursor produced by ecdA will undergo six rounds of hydroxylation. Five hydroxylase genes (ecdG, ecdH, ecdK, htyE and htyF) are embedded within the echinocandin B (ecd) and L-homotyrosine (hty) clusters. The polypeptide is Nonribosomal peptide synthetase ecdA (Aspergillus rugulosus (Emericella rugulosa)).